Consider the following 419-residue polypeptide: Cysteine desulfurase (419 aa).

Pyridoxal 5'-phosphate-binding positions include 69-70 (AT), Asn157, Gln185, and 205-207 (SAH). Position 208 is an N6-(pyridoxal phosphate)lysine (Lys208). Thr245 is a binding site for pyridoxal 5'-phosphate. Cys333 (cysteine persulfide intermediate) is an active-site residue. Residue Cys333 participates in [2Fe-2S] cluster binding. The disordered stretch occupies residues 392 to 419 (TPIQDEVRDDNRASSNSLNRGSAASKES). The span at 404-413 (ASSNSLNRGS) shows a compositional bias: polar residues.

The protein belongs to the class-V pyridoxal-phosphate-dependent aminotransferase family. NifS/IscS subfamily. As to quaternary structure, homodimer. It depends on pyridoxal 5'-phosphate as a cofactor.

It carries out the reaction (sulfur carrier)-H + L-cysteine = (sulfur carrier)-SH + L-alanine. Catalyzes the removal of elemental sulfur atoms from cysteine to produce alanine. Seems to participate in the biosynthesis of the nitrogenase metalloclusters by providing the inorganic sulfur required for the Fe-S core formation. The sequence is that of Cysteine desulfurase from Frankia sp. (strain EuIK1).